A 315-amino-acid chain; its full sequence is Prephenate dehydratase (315 aa).

Residues 3–190 (RIAYLGPQGT…ARTRFVLVGR (188 aa)) form the Prephenate dehydratase domain. Positions 204–281 (SVALRLPNTP…EDVRYLGSWP (78 aa)) constitute an ACT domain.

Homodimer.

It catalyses the reaction prephenate + H(+) = 3-phenylpyruvate + CO2 + H2O. It functions in the pathway amino-acid biosynthesis; L-phenylalanine biosynthesis; phenylpyruvate from prephenate: step 1/1. This is Prephenate dehydratase (pheA) from Mycobacterium sp. (strain KMS).